The following is a 248-amino-acid chain: MALCEAAGCGSALLWPRLLLFGDSITQFSFQQGGWGASLADRLVRKCDVLNRGFSGYNTRWAKIILPRLIRKGNSLDIPVAVTIFFGANDSALKDENPKQHIPLEEYAANLKSMVQYLKSVDIPENRVILITPTPLCETAWEEQCIIQGCKLNRLNSVVGEYANACLQVAQDCGTDVLDLWTLMQDSQDFSSYLSDGLHLSPKGNEFLFSHLWPLIEKKVSSLPLLLPYWRDVAEAKPELSLLGDGDH.

Catalysis depends on serine 24, which acts as the Nucleophile. An N6-succinyllysine modification is found at lysine 63. The active-site Proton donor is aspartate 196. The active-site Proton acceptor is histidine 199.

Belongs to the 'GDSL' lipolytic enzyme family. IAH1 subfamily.

Its function is as follows. Probable lipase. This is Isoamyl acetate-hydrolyzing esterase 1 homolog (IAH1) from Homo sapiens (Human).